Here is a 612-residue protein sequence, read N- to C-terminus: 1-deoxy-D-xylulose-5-phosphate synthase (612 aa).

Thiamine diphosphate-binding positions include H77 and 118-120 (GHS). Residue D147 participates in Mg(2+) binding. Thiamine diphosphate is bound by residues 148–149 (AA), N176, Y288, and E365. N176 contacts Mg(2+).

This sequence belongs to the transketolase family. DXPS subfamily. Homodimer. Requires Mg(2+) as cofactor. It depends on thiamine diphosphate as a cofactor.

The enzyme catalyses D-glyceraldehyde 3-phosphate + pyruvate + H(+) = 1-deoxy-D-xylulose 5-phosphate + CO2. Its pathway is metabolic intermediate biosynthesis; 1-deoxy-D-xylulose 5-phosphate biosynthesis; 1-deoxy-D-xylulose 5-phosphate from D-glyceraldehyde 3-phosphate and pyruvate: step 1/1. Its function is as follows. Catalyzes the acyloin condensation reaction between C atoms 2 and 3 of pyruvate and glyceraldehyde 3-phosphate to yield 1-deoxy-D-xylulose-5-phosphate (DXP). The protein is 1-deoxy-D-xylulose-5-phosphate synthase of Malacoplasma penetrans (strain HF-2) (Mycoplasma penetrans).